The following is a 271-amino-acid chain: MTERVRVAITGGSGRMGRTLIEAAKQNGIILLGAAIERAGSTLMGVDAGELAGVGSMNVAITDSLDKAVNDFDVLIDFTSPEASVFHTDWCAKNGKAIVIGTTGFNHAQKEQISAYADQIPIVMAPNMAVGVNLMWKLLEVTAEVMGHYCDIEIIEGHHRYKKDAPSGTALKMGEVIAETLGRDLEKCAVYGREGMTGERDRETIGFATVRAGDIVGEHTALFADIGERLEITHKASSRMTFANGAMRAATWLVEQDAGLYDMQQVLGLKA.

NAD(+) contacts are provided by residues 11 to 16 (GGSGRM) and E37. Position 38 (R38) interacts with NADP(+). NAD(+) is bound by residues 101-103 (GTT) and 125-128 (APNM). H158 (proton donor/acceptor) is an active-site residue. H159 contributes to the (S)-2,3,4,5-tetrahydrodipicolinate binding site. The Proton donor role is filled by K162. 168 to 169 (GT) serves as a coordination point for (S)-2,3,4,5-tetrahydrodipicolinate.

Belongs to the DapB family.

The protein resides in the cytoplasm. The enzyme catalyses (S)-2,3,4,5-tetrahydrodipicolinate + NAD(+) + H2O = (2S,4S)-4-hydroxy-2,3,4,5-tetrahydrodipicolinate + NADH + H(+). It catalyses the reaction (S)-2,3,4,5-tetrahydrodipicolinate + NADP(+) + H2O = (2S,4S)-4-hydroxy-2,3,4,5-tetrahydrodipicolinate + NADPH + H(+). It functions in the pathway amino-acid biosynthesis; L-lysine biosynthesis via DAP pathway; (S)-tetrahydrodipicolinate from L-aspartate: step 4/4. Functionally, catalyzes the conversion of 4-hydroxy-tetrahydrodipicolinate (HTPA) to tetrahydrodipicolinate. The protein is 4-hydroxy-tetrahydrodipicolinate reductase of Shewanella halifaxensis (strain HAW-EB4).